The primary structure comprises 67 residues: Preprofallaxidin-1 (67 aa).

Positions 1-22 (MASLKKSLFLVLFLGMVSLSIC) are cleaved as a signal peptide. The propeptide occupies 23-46 (DKEKREGENEEEEEEHEEESEEKR). The segment at 24–46 (KEKREGENEEEEEEHEEESEEKR) is disordered. Residues 30 to 42 (ENEEEEEEHEEES) are compositionally biased toward acidic residues.

In terms of tissue distribution, expressed by the skin glands.

Its subcellular location is the secreted. Fallaxidin-4.1 shows antibacterial activity against the Gram-positive bacteria L.lactis (MIC=12 uM), M.luteus (MIC=100 uM), S.epidermidis (MIC=100 uM) and S.uberis (MIC=50 uM). No antibacterial activity against the Gram-positive bacteria B.cereus, E.faecalis, L.innocua, S.aureus, or the Gram-negative bacteria E.cloacae and E.coli. Inhibits the formation of NO by neuronal nitric oxide synthase with an IC(50) of 13.3 uM. This Litoria fallax (Eastern dwarf tree frog) protein is Preprofallaxidin-1.